Consider the following 213-residue polypeptide: Ribosomal RNA small subunit methyltransferase G (213 aa).

Residues glycine 77, methionine 82, 104-106 (EKS), and arginine 145 contribute to the S-adenosyl-L-methionine site.

This sequence belongs to the methyltransferase superfamily. RNA methyltransferase RsmG family.

It is found in the cytoplasm. It carries out the reaction guanosine(527) in 16S rRNA + S-adenosyl-L-methionine = N(7)-methylguanosine(527) in 16S rRNA + S-adenosyl-L-homocysteine. Specifically methylates the N7 position of guanine in position 527 of 16S rRNA. The protein is Ribosomal RNA small subunit methyltransferase G of Pelagibacter ubique (strain HTCC1062).